We begin with the raw amino-acid sequence, 504 residues long: Syntaphilin (504 aa).

Positions 1–74 are disordered; that stretch reads MAMSLQGSRR…HGIKPPTPEQ (74 aa). 2 stretches are compositionally biased toward low complexity: residues 7–26 and 33–49; these read GSRR…VSVR and SLSS…SDSS. A coiled-coil region spans residues 79 to 161; that stretch reads LQQKEVCIRH…VKNNLIDKDK (83 aa). The segment at 191–244 is disordered; sequence VAKEEGTGESAGGSPARSLTRSSTYTKLSDPAVCGDRQAGDPSNTPAEDRADSG. Phosphoserine occurs at positions 200 and 204. The segment covering 207-217 has biased composition (polar residues); it reads RSLTRSSTYTK. A Phosphothreonine modification is found at Thr-214. Ser-219 is subject to Phosphoserine. The residue at position 235 (Thr-235) is a Phosphothreonine. The chain crosses the membrane as a helical span at residues 437–456; it reads YIVDLLAVVVPAVPTVAWLC.

In terms of assembly, binds to STX1A. Interacts with DNM1; this interaction inhibits the binding of DNM1 to AMPH and DNM1-receptor-mediated endocytosis.

The protein localises to the membrane. The protein resides in the synapse. It is found in the synaptosome. In terms of biological role, inhibits SNARE complex formation by absorbing free STX1A. This is Syntaphilin from Rattus norvegicus (Rat).